The following is a 190-amino-acid chain: Protein SYM1 (190 aa).

Transmembrane regions (helical) follow at residues 16-36 (PVLGNMISSAVLFGTGDVIAQ), 54-74 (IVTWGGILFAPTVNLWFRTLE), 91-111 (LDQFGFAPVILSGFFTAMTFM), and 131-151 (LQANWMLFIPFQILNMGLVPL).

It belongs to the peroxisomal membrane protein PXMP2/4 family.

The protein localises to the mitochondrion inner membrane. May be involved in cellular response to stress. Required to maintain mitochondrial DNA (mtDNA) integrity and stability. This is Protein SYM1 (SYM1) from Cryptococcus neoformans var. neoformans serotype D (strain B-3501A) (Filobasidiella neoformans).